Consider the following 1007-residue polypeptide: Rho-type GTPase-activating protein 1 (1007 aa).

2 consecutive LIM zinc-binding domains span residues Cys13 to Cys66 and Cys70 to Cys122. Disordered stretches follow at residues Ile203–Ser293, Glu401–Leu478, and Lys505–Ser600. A compositionally biased stretch (low complexity) spans Asn212 to Asn221. Polar residues-rich tracts occupy residues Ala250 to Thr261 and His270 to Ser293. Residue Thr278 is modified to Phosphothreonine. Position 291 is a phosphoserine (Ser291). Over residues Lys411–Arg421 the composition is skewed to basic residues. The segment covering Arg454–Thr466 has biased composition (basic and acidic residues). Composition is skewed to polar residues over residues Gly467–Leu478 and Ser529–Ser579. Phosphothreonine is present on Thr532. The segment covering Glu583–Ser600 has biased composition (basic and acidic residues). In terms of domain architecture, Rho-GAP spans Ser791–Leu1006.

GTPase-activating protein (GAP) for CDC42 and/or RHO1. Negative regulator of the pheromone-response pathway through the STE20 protein kinase; acts at a step between the G-protein and the MAP kinase module. Dominant suppressor of bud emergence defect caused by deletion of IPL2/BEM2. Involved in the control of polarized cell growth and proper bud site selection. In Saccharomyces cerevisiae (strain ATCC 204508 / S288c) (Baker's yeast), this protein is Rho-type GTPase-activating protein 1 (RGA1).